Here is a 353-residue protein sequence, read N- to C-terminus: 2-oxoglutarate-Fe(II) type oxidoreductase ppzD (353 aa).

The Fe2OG dioxygenase domain occupies 181 to 292 (NTSELRLNHY…RYSVAYFGKP (112 aa)). 3 residues coordinate Fe cation: His208, Asp210, and His268. 2-oxoglutarate is bound at residue Arg283.

This sequence belongs to the iron/ascorbate-dependent oxidoreductase family. Fe(2+) is required as a cofactor.

The enzyme catalyses L-proline + 2-oxoglutarate + O2 = trans-4-hydroxy-L-proline + succinate + CO2. The catalysed reaction is L-proline + 2-oxoglutarate + O2 = trans-3-hydroxy-L-proline + succinate + CO2. It catalyses the reaction D-proline + 2-oxoglutarate + O2 = cis-4-hydroxy-D-proline + succinate + CO2. It participates in secondary metabolite biosynthesis. Its function is as follows. 2-oxoglutarate-Fe(II) type oxidoreductase; part of the gene cluster that mediates the biosynthesis of pyrrolopyrazines, secondary metabolites showing insecticidal activity. Within the pathway, ppzD converts L-proline into trans-4-hydroxy-L-proline as a major product, yielding a key precursor for peramine biosynthesis. PpzD is also able to convert L-proline into trans-3-hydroxy-L-proline. The single multifunctional NRPS ppzA is sufficient to produce peramine via condensation of 1-pyrroline-5-carboxylate and arginine, N-methylation of the alpha-amino group of arginine and reduction of the thioester and the cyclization to form an iminium ion resulting in release from the peptide synthetase. Deprotonation of this intermediate and oxidation of the pyrroline ring would give rise to peramine. In Epichloe species that produce only peramine, the peramine synthetase gene is not localized in a gene cluster, in contrast to Metarhizium species that contain additional pyrrolopyrazine biosynthesis genes. The 2-oxoglutarate-Fe(II) type oxidoreductase ppzC hydroxylates peramine to yield the newly identified compound 8-hydroxyperamine whereas ppzD converts L-proline into trans-4-hydroxy-L-proline, a precursor of peramine biosynthesis. The sequence is that of 2-oxoglutarate-Fe(II) type oxidoreductase ppzD from Metarhizium rileyi (strain RCEF 4871) (Nomuraea rileyi).